Consider the following 216-residue polypeptide: 1-Cys peroxiredoxin PER1 (216 aa).

Residues 4–159 (ITLGDTVPNL…VLRALDSLLM (156 aa)) form the Thioredoxin domain. Cysteine 46 (cysteine sulfenic acid (-SOH) intermediate) is an active-site residue. The Bipartite nuclear localization signal motif lies at 191-214 (KKMFPQGFKTADLPSKKGYLRHTE).

This sequence belongs to the peroxiredoxin family. Prx6 subfamily. In terms of tissue distribution, predominantly expressed in seed. Expressed in endosperm, embryo and aleurone cells. Also detected in young seedlings, abscission zones, stem branching points.

Its subcellular location is the nucleus. The protein localises to the cytoplasm. It carries out the reaction a hydroperoxide + [thioredoxin]-dithiol = an alcohol + [thioredoxin]-disulfide + H2O. In terms of biological role, thiol-specific peroxidase that catalyzes the reduction of hydrogen peroxide and organic hydroperoxides to water and alcohols, respectively. Seems to contribute to the inhibition of germination during stress. In Arabidopsis thaliana (Mouse-ear cress), this protein is 1-Cys peroxiredoxin PER1 (PER1).